A 396-amino-acid polypeptide reads, in one-letter code: Phosphoglycerate kinase (396 aa).

Substrate-binding positions include 21–23 (DFN), R36, 59–62 (HLGK), R119, and R156. ATP is bound by residues K206, G294, E325, and 352–355 (GGDS).

Belongs to the phosphoglycerate kinase family. Monomer.

It is found in the cytoplasm. The catalysed reaction is (2R)-3-phosphoglycerate + ATP = (2R)-3-phospho-glyceroyl phosphate + ADP. It participates in carbohydrate degradation; glycolysis; pyruvate from D-glyceraldehyde 3-phosphate: step 2/5. This Listeria innocua serovar 6a (strain ATCC BAA-680 / CLIP 11262) protein is Phosphoglycerate kinase.